The following is a 202-amino-acid chain: Large ribosomal subunit protein bL17 (202 aa).

Positions 148–202 (DEAPAAESTDAAQVEAGGVEQPDTLPDADAPATADEGVEVDAAEVDPSDEKKDQA) are disordered. Positions 169-182 (PDTLPDADAPATAD) are enriched in low complexity. The span at 183–194 (EGVEVDAAEVDP) shows a compositional bias: acidic residues.

Belongs to the bacterial ribosomal protein bL17 family. As to quaternary structure, part of the 50S ribosomal subunit. Contacts protein L32.

This chain is Large ribosomal subunit protein bL17, found in Kineococcus radiotolerans (strain ATCC BAA-149 / DSM 14245 / SRS30216).